The primary structure comprises 61 residues: HSSNDFCYLPAVRGRCRGYFPRYFFSSETGKCERFIYGGCGGNRNNFESAQECGSTCYPRE.

Positions 7-57 (CYLPAVRGRCRGYFPRYFFSSETGKCERFIYGGCGGNRNNFESAQECGSTC) constitute a BPTI/Kunitz inhibitor domain. Intrachain disulfides connect cysteine 7–cysteine 57, cysteine 16–cysteine 40, and cysteine 32–cysteine 53.

The protein localises to the secreted. Its subcellular location is the nematocyst. Functionally, protease inhibitor. This is PI-actitoxin-Axm2b from Anthopleura aff. xanthogrammica (Sea anemone).